A 460-amino-acid polypeptide reads, in one-letter code: NADH-ubiquinone oxidoreductase chain 4 (460 aa).

A run of 12 helical transmembrane segments spans residues 20–42 (PKWL…LMWF), 61–81 (PLST…ILAS), 93–113 (QRLY…AFGA), 114–134 (TEII…LIII), 148–168 (TYFL…LLLL), 195–215 (IWWA…GVHL), 225–245 (PVAG…YGMM), 258–278 (LAYP…SICL), 285–304 (SLIA…GILI), 308–330 (WGFS…LFCL), 351–371 (IIFP…LALP), and 394–414 (ILLT…MFLM).

This sequence belongs to the complex I subunit 4 family.

The protein resides in the mitochondrion membrane. The enzyme catalyses a ubiquinone + NADH + 5 H(+)(in) = a ubiquinol + NAD(+) + 4 H(+)(out). Functionally, core subunit of the mitochondrial membrane respiratory chain NADH dehydrogenase (Complex I) that is believed to belong to the minimal assembly required for catalysis. Complex I functions in the transfer of electrons from NADH to the respiratory chain. The immediate electron acceptor for the enzyme is believed to be ubiquinone. The sequence is that of NADH-ubiquinone oxidoreductase chain 4 (MT-ND4) from Carassius auratus (Goldfish).